Reading from the N-terminus, the 517-residue chain is GMP synthase [glutamine-hydrolyzing] (517 aa).

A Glutamine amidotransferase type-1 domain is found at 9 to 202 (KIIVLDYGSQ…AFNVCKAKGD (194 aa)). Cys86 serves as the catalytic Nucleophile. Catalysis depends on residues His176 and Glu178. The GMPS ATP-PPase domain occupies 203-392 (WSMDSFIDME…LGMPDEIVWR (190 aa)). 230–236 (SGGVDSS) is a binding site for ATP.

As to quaternary structure, homodimer.

It catalyses the reaction XMP + L-glutamine + ATP + H2O = GMP + L-glutamate + AMP + diphosphate + 2 H(+). It functions in the pathway purine metabolism; GMP biosynthesis; GMP from XMP (L-Gln route): step 1/1. In terms of biological role, catalyzes the synthesis of GMP from XMP. The sequence is that of GMP synthase [glutamine-hydrolyzing] from Streptococcus mutans serotype c (strain ATCC 700610 / UA159).